Reading from the N-terminus, the 741-residue chain is Subtilisin-like protease SBT4.4 (741 aa).

The first 24 residues, 1-24 (MAKGTTFIFLFSSLLVLSLSSVSA), serve as a signal peptide directing secretion. Positions 25-112 (DKDDHGDQQV…VFPSRKLKLQ (88 aa)) are cleaved as a propeptide — activation peptide. Residues 34–111 (VYIVYLGSLP…SVFPSRKLKL (78 aa)) form the Inhibitor I9 domain. The Peptidase S8 domain occupies 116–589 (SWNFMGLKEG…SGHVDPIDAI (474 aa)). The active-site Charge relay system is Asp-144. N-linked (GlcNAc...) asparagine glycans are attached at residues Asn-175 and Asn-195. Residue His-204 is the Charge relay system of the active site. Asn-227 and Asn-357 each carry an N-linked (GlcNAc...) asparagine glycan. The region spanning 359-445 (TNYPLVYGKS…LSNDDYKSLV (87 aa)) is the PA domain. N-linked (GlcNAc...) asparagine glycosylation occurs at Asn-449. Residue Ser-528 is the Charge relay system of the active site. N-linked (GlcNAc...) asparagine glycans are attached at residues Asn-565, Asn-610, Asn-623, and Asn-654.

The protein belongs to the peptidase S8 family. In terms of processing, the C-terminal propeptide is autocleaved.

The protein localises to the secreted. The chain is Subtilisin-like protease SBT4.4 from Arabidopsis thaliana (Mouse-ear cress).